The primary structure comprises 805 residues: U-box domain-containing protein 70 (805 aa).

TPR repeat units follow at residues 15–48 (ARREKEAGNAAYRKLYLETAVRHYTRGALLDPRD), 49–82 (ISFLTNRAAAYLLMSKYKECVRDCDEAVEKGREL), 90–127 (ARALARKASALLKLAACAADYDPAIRALQQSLAEHYSE), 129–153 (TLAKLGEAEEARKEIEERERLDQEA), 154–187 (ADHHRDRGNDFFKQKRYQEAAMHYTEAMKKNPKD), 189–221 (RVFSNRAQCHIYLGALPEGLEDADKCIALDPTF), and 222–255 (LKGYLRKAKVQLLMGNYEIALATYVEGLKCDPNN). The disordered stretch occupies residues 136–160 (AEEARKEIEERERLDQEAADHHRDR). Residues 341-417 (RKETEESLSR…VREVEELRQK (77 aa)) are a coiled coil. The Protein kinase domain maps to 445-711 (FSNSLKIGEG…GEVWAIVEAI (267 aa)). Residues 451 to 459 (IGEGGFGCV) and Lys472 contribute to the ATP site. Asp567 serves as the catalytic Proton acceptor. The U-box domain occupies 730-804 (SPPSYFICPI…QEWLQQHSMS (75 aa)).

The protein belongs to the protein kinase superfamily. Ser/Thr protein kinase family. In terms of assembly, interacts with MODD.

It carries out the reaction L-seryl-[protein] + ATP = O-phospho-L-seryl-[protein] + ADP + H(+). It catalyses the reaction L-threonyl-[protein] + ATP = O-phospho-L-threonyl-[protein] + ADP + H(+). The catalysed reaction is S-ubiquitinyl-[E2 ubiquitin-conjugating enzyme]-L-cysteine + [acceptor protein]-L-lysine = [E2 ubiquitin-conjugating enzyme]-L-cysteine + N(6)-ubiquitinyl-[acceptor protein]-L-lysine.. It functions in the pathway protein modification; protein ubiquitination. In terms of biological role, functions as an E3 ubiquitin ligase. Is recruited by MODD to promote ubiquitination of BZIP46, a positive regulator of abscisic acid (ABA) signaling and drought stress tolerance. This is U-box domain-containing protein 70 from Oryza sativa subsp. japonica (Rice).